A 628-amino-acid chain; its full sequence is Probable potassium transport system protein Kup (628 aa).

Transmembrane regions (helical) follow at residues 56–76 (ILSL…VLLI), 109–129 (LILG…TPAI), 141–161 (AAPG…TLLF), 174–194 (FFGP…VVHI), 209–229 (ALAF…AVVL), 253–273 (WFSL…AMLL), 295–315 (LIVL…TAAF), 343–363 (IYVP…VVTF), 372–392 (AYGI…FFVI), 400–420 (WALC…FFAA), and 425–445 (ILDG…LMMT).

It belongs to the HAK/KUP transporter (TC 2.A.72) family.

The protein localises to the cell inner membrane. The enzyme catalyses K(+)(in) + H(+)(in) = K(+)(out) + H(+)(out). Transport of potassium into the cell. Likely operates as a K(+):H(+) symporter. The sequence is that of Probable potassium transport system protein Kup from Methylibium petroleiphilum (strain ATCC BAA-1232 / LMG 22953 / PM1).